Consider the following 431-residue polypeptide: MYRTKVGLKDRQQLYKLIISQLLYDGYISIANGLINEIKPQSVCAPSEQLLHLIKLGMENDDTAVQYAIGRSDTVAPGTGIDLEFDADVQTMSPEASEYETCYVTSHKGPCRVATYSRDGQLIATGSADASIKILDTERMLAKSAMPIEVMMNETAQQNMENHPVIRTLYDHVDEVTCLAFHPTEQILASGSRDYTLKLFDYSKPSAKRAFKYIQEAEMLRSISFHPSGDFILVGTQHPTLRLYDINTFQCFVSCNPQDQHTDAICSVNYNSSANMYVTGSKDGCIKLWDGVSNRCITTFEKAHDGAEVCSAIFSKNSKYILSSGKDSVAKLWEISTGRTLVRYTGAGLSGRQVHRTQAVFNHTEDYVLLPDERTISLCCWDSRTAERRNLLSLGHNNIVRCIVHSPTNPGFMTCSDDFRARFWYRRSTTD.

The interval 14–35 is hydrophobic; it reads LYKLIISQLLYDGYISIANGLI. 6 WD repeats span residues 106–145, 171–210, 215–254, 260–301, 303–343, and 395–430; these read SHKG…AKSA, DHVD…AKRA, QEAE…CFVS, QHTD…TTFE, AHDG…TLVR, and GHNN…RSTT.

As to quaternary structure, homodimer. The CSTF complex is composed of CSTF1 (50 kDa subunit), CSTF2 (64 kDa subunit) and CSTF3 (77 kDa subunit). Interacts (via repeats WD) directly with CSTF3. Interacts (via repeat WD6) with BARD1. Interacts with ERCC6. Post-translationally, the N-terminus is blocked.

The protein resides in the nucleus. Functionally, one of the multiple factors required for polyadenylation and 3'-end cleavage of mammalian pre-mRNAs. May be responsible for the interaction of CSTF with other factors to form a stable complex on the pre-mRNA. The polypeptide is Cleavage stimulation factor subunit 1 (CSTF1) (Homo sapiens (Human)).